We begin with the raw amino-acid sequence, 270 residues long: DNA repair protein RecO (270 aa).

The protein belongs to the RecO family.

Functionally, involved in DNA repair and RecF pathway recombination. This is DNA repair protein RecO from Synechococcus sp. (strain WH7803).